We begin with the raw amino-acid sequence, 418 residues long: Probable serine hydroxymethyltransferase (418 aa).

Residues L118 and 122–124 each bind (6S)-5,6,7,8-tetrahydrofolate; that span reads GHL. N6-(pyridoxal phosphate)lysine is present on K226. 351–353 contributes to the (6S)-5,6,7,8-tetrahydrofolate binding site; sequence SPF.

This sequence belongs to the SHMT family. As to quaternary structure, homodimer. Requires pyridoxal 5'-phosphate as cofactor.

It localises to the cytoplasm. The catalysed reaction is (6R)-5,10-methylene-5,6,7,8-tetrahydrofolate + glycine + H2O = (6S)-5,6,7,8-tetrahydrofolate + L-serine. The protein operates within one-carbon metabolism; tetrahydrofolate interconversion. Functionally, catalyzes the reversible interconversion of serine and glycine with tetrahydrofolate (THF) serving as the one-carbon carrier. This reaction serves as the major source of one-carbon groups required for the biosynthesis of purines, thymidylate, methionine, and other important biomolecules. The protein is Probable serine hydroxymethyltransferase of Mesomycoplasma hyopneumoniae (strain 7448) (Mycoplasma hyopneumoniae).